The sequence spans 369 residues: Cytochrome c-type biogenesis protein CycH (369 aa).

2 helical membrane passes run 7-23 (FALM…WPLG) and 91-111 (AAAV…YMPL). Residues 112–369 (GSPRLQDFPL…EGLKTLGLDG (258 aa)) are Periplasmic-facing.

It is found in the cell inner membrane. Required for the biogenesis of c-type cytochromes. Possible subunit of a heme lyase. The sequence is that of Cytochrome c-type biogenesis protein CycH (cycH) from Bradyrhizobium diazoefficiens (strain JCM 10833 / BCRC 13528 / IAM 13628 / NBRC 14792 / USDA 110).